The sequence spans 210 residues: Ovomucoid (210 aa).

A signal peptide spans 1 to 24 (MAMAGVFVLFSFVLCGFLPDAAFG). Kazal-like domains lie at 25 to 88 (AEVD…ECKE), 89 to 153 (TVPM…GCRK), and 156 to 210 (AAVS…FGKC). 3 disulfide bridges follow: C29/C68, C46/C65, and C54/C86. N-linked (GlcNAc...) asparagine glycosylation is present at N34. N77, N93, and N99 each carry an N-linked (GlcNAc...) asparagine glycan. Disulfide bonds link C94/C133, C111/C130, C119/C151, C162/C192, C170/C189, and C178/C210. A glycan (N-linked (GlcNAc...) asparagine; partial) is linked at N199.

It localises to the secreted. In terms of biological role, serine protease inhibitor. Inhibits trypsin. This is Ovomucoid from Gallus gallus (Chicken).